The sequence spans 433 residues: Phosphoglycerate kinase, chloroplastic (433 aa).

The transit peptide at 1–28 (GASFSLHVLSKINSYKSQSTKPIRGVAS) directs the protein to the chloroplast. The (2R)-3-phosphoglycerate site is built by alanine 51, aspartate 52, asparagine 54, arginine 68, serine 90, histidine 91, glycine 93, arginine 94, arginine 149, histidine 181, and arginine 182. Glycine 227 is a binding site for ADP. CDP is bound at residue glycine 227. Residues lysine 229 and lysine 233 each contribute to the AMP site. Lysine 233 contributes to the ATP binding site. Glycine 251 provides a ligand contact to ADP. Glycine 251 contributes to the CDP binding site. AMP is bound by residues glycine 252 and glycine 324. Residues glycine 252 and glycine 324 each coordinate ATP. Positions 349 and 354 each coordinate CDP. Residue phenylalanine 354 participates in ADP binding. Glutamate 355 is an AMP binding site. ATP contacts are provided by glutamate 355, aspartate 386, and serine 387. Aspartate 386 lines the Mg(2+) pocket.

Belongs to the phosphoglycerate kinase family. In terms of assembly, monomer. It depends on Mg(2+) as a cofactor.

Its subcellular location is the plastid. The protein localises to the chloroplast. The enzyme catalyses (2R)-3-phosphoglycerate + ATP = (2R)-3-phospho-glyceroyl phosphate + ADP. It functions in the pathway carbohydrate biosynthesis; Calvin cycle. This Spinacia oleracea (Spinach) protein is Phosphoglycerate kinase, chloroplastic.